The sequence spans 441 residues: Ribosomal protein uS12 methylthiotransferase RimO (441 aa).

The MTTase N-terminal domain maps to 8–118; that stretch reads PKIGFVSLGC…VLEHVHHYVP (111 aa). Residues Cys-17, Cys-53, Cys-82, Cys-150, Cys-154, and Cys-157 each coordinate [4Fe-4S] cluster. A Radical SAM core domain is found at 136-373; it reads LTPRHYAYLK…MQLQQQISAE (238 aa). A TRAM domain is found at 376-441; sequence QEKVGREILV…DEYDLWGSRV (66 aa).

Belongs to the methylthiotransferase family. RimO subfamily. [4Fe-4S] cluster serves as cofactor.

It localises to the cytoplasm. It carries out the reaction L-aspartate(89)-[ribosomal protein uS12]-hydrogen + (sulfur carrier)-SH + AH2 + 2 S-adenosyl-L-methionine = 3-methylsulfanyl-L-aspartate(89)-[ribosomal protein uS12]-hydrogen + (sulfur carrier)-H + 5'-deoxyadenosine + L-methionine + A + S-adenosyl-L-homocysteine + 2 H(+). Its function is as follows. Catalyzes the methylthiolation of an aspartic acid residue of ribosomal protein uS12. The polypeptide is Ribosomal protein uS12 methylthiotransferase RimO (Shigella sonnei (strain Ss046)).